Here is a 225-residue protein sequence, read N- to C-terminus: Large ribosomal subunit protein uL4 (225 aa).

A disordered region spans residues 46–102 (KRQGTHATKGRGEVRGGGRKPFRQKGTGRARQGSIRAPHFTGGGTVHGPQPRDYSQR). The span at 62-73 (GGRKPFRQKGTG) shows a compositional bias: basic residues.

It belongs to the universal ribosomal protein uL4 family. In terms of assembly, part of the 50S ribosomal subunit.

Its function is as follows. One of the primary rRNA binding proteins, this protein initially binds near the 5'-end of the 23S rRNA. It is important during the early stages of 50S assembly. It makes multiple contacts with different domains of the 23S rRNA in the assembled 50S subunit and ribosome. Forms part of the polypeptide exit tunnel. This is Large ribosomal subunit protein uL4 from Corynebacterium urealyticum (strain ATCC 43042 / DSM 7109).